The following is an 81-amino-acid chain: ATP synthase subunit c, chloroplastic (81 aa).

A run of 2 helical transmembrane segments spans residues 3–23 (PIIS…ASIG) and 57–77 (LAFM…LLFA).

The protein belongs to the ATPase C chain family. As to quaternary structure, F-type ATPases have 2 components, F(1) - the catalytic core - and F(0) - the membrane proton channel. F(1) has five subunits: alpha(3), beta(3), gamma(1), delta(1), epsilon(1). F(0) has four main subunits: a(1), b(1), b'(1) and c(10-14). The alpha and beta chains form an alternating ring which encloses part of the gamma chain. F(1) is attached to F(0) by a central stalk formed by the gamma and epsilon chains, while a peripheral stalk is formed by the delta, b and b' chains.

It localises to the plastid. The protein resides in the chloroplast thylakoid membrane. In terms of biological role, f(1)F(0) ATP synthase produces ATP from ADP in the presence of a proton or sodium gradient. F-type ATPases consist of two structural domains, F(1) containing the extramembraneous catalytic core and F(0) containing the membrane proton channel, linked together by a central stalk and a peripheral stalk. During catalysis, ATP synthesis in the catalytic domain of F(1) is coupled via a rotary mechanism of the central stalk subunits to proton translocation. Key component of the F(0) channel; it plays a direct role in translocation across the membrane. A homomeric c-ring of between 10-14 subunits forms the central stalk rotor element with the F(1) delta and epsilon subunits. This is ATP synthase subunit c, chloroplastic from Phaseolus vulgaris (Kidney bean).